Reading from the N-terminus, the 186-residue chain is MVGEIPVLLIMKKPIVVSGDVSVYDVAKLMVEQDVPCVLVVCERPNHESIEVATDKDIIKKVLIRKLPPDKVKVEDISSGKLVTIPPNTTIDEALEIMNKYKTNELFIVDDGKIVGVITEEDLIKIAPEIISTLKELVNYLLQIIDEVTSGDISDKSKEIQNINQGKDNKKDSESDIRKKKIMLIK.

CBS domains lie at 10-69 (IMKK…KLPP) and 77-133 (ISSG…IIST).

This is an uncharacterized protein from Methanocaldococcus jannaschii (strain ATCC 43067 / DSM 2661 / JAL-1 / JCM 10045 / NBRC 100440) (Methanococcus jannaschii).